Consider the following 360-residue polypeptide: Phospho-N-acetylmuramoyl-pentapeptide-transferase (360 aa).

10 helical membrane passes run 27–47 (ILSIITALTISLWMGPKLIAW), 73–93 (TMGGIMILTAISVTVFLWADL), 94–114 (TNPYVWAVMFVLLGYGAVGFV), 132–152 (WKYFWQSSIALVVAFALYAYG), 168–188 (VMPQLGLAYILLTYFVIVGTS), 199–219 (GLAIMPTVFVAAGFAFIAWAT), 236–256 (ASELVVVCAAIVGAGFGFLWF), 263–283 (VFMGDVGSLALGGALGTIAVL), 288–308 (FLLVIMGGVFVVETLSVILQV), and 338–358 (VIVRFWIISMLLVLIALATLK).

Belongs to the glycosyltransferase 4 family. MraY subfamily. The cofactor is Mg(2+).

The protein resides in the cell inner membrane. The enzyme catalyses UDP-N-acetyl-alpha-D-muramoyl-L-alanyl-gamma-D-glutamyl-meso-2,6-diaminopimeloyl-D-alanyl-D-alanine + di-trans,octa-cis-undecaprenyl phosphate = di-trans,octa-cis-undecaprenyl diphospho-N-acetyl-alpha-D-muramoyl-L-alanyl-D-glutamyl-meso-2,6-diaminopimeloyl-D-alanyl-D-alanine + UMP. Its pathway is cell wall biogenesis; peptidoglycan biosynthesis. Catalyzes the initial step of the lipid cycle reactions in the biosynthesis of the cell wall peptidoglycan: transfers peptidoglycan precursor phospho-MurNAc-pentapeptide from UDP-MurNAc-pentapeptide onto the lipid carrier undecaprenyl phosphate, yielding undecaprenyl-pyrophosphoryl-MurNAc-pentapeptide, known as lipid I. The polypeptide is Phospho-N-acetylmuramoyl-pentapeptide-transferase (Aliivibrio fischeri (strain MJ11) (Vibrio fischeri)).